Consider the following 1020-residue polypeptide: Protein CLASP-2 (1020 aa).

Positions 259–271 are enriched in low complexity; it reads ASDAASSSTSINS. 3 disordered regions span residues 259–280, 329–387, and 419–461; these read ASDAASSSTSINSERGTAPFRS, PMTT…RPSA, and LQKA…ALDT. Over residues 329-343 the composition is skewed to polar residues; the sequence is PMTTRTLSKIDTSPG. Low complexity predominate over residues 372-381; the sequence is SQPGSRNGSP. A compositionally biased stretch (polar residues) spans 450–460; the sequence is QKATPQKSALD. The HEAT repeat unit spans residues 954–992; the sequence is LAPCVIKSYDSPSSAVRKTAVYCLVAMVNKLGMKTMEPH.

It belongs to the CLASP family. In terms of assembly, interacts with hcp-1 and hcp-2.

The protein localises to the cytoplasm. Its subcellular location is the cytoskeleton. The protein resides in the microtubule organizing center. It localises to the centrosome. It is found in the chromosome. The protein localises to the centromere. Its subcellular location is the kinetochore. The protein resides in the spindle. Functionally, probable microtubule plus-end tracking protein that promotes the stabilization of dynamic microtubules. Required for the formation of mitotic and meiotic spindles. Specifically promotes the polymerization of kinetochore-bound microtubules. Also required for cytoplasmic streaming. Essential for embryonic development. This Caenorhabditis elegans protein is Protein CLASP-2 (cls-2).